The primary structure comprises 429 residues: Keratin, type I cytoskeletal 18 (429 aa).

The interval 2-78 is head; sequence SYSRSVYSSS…NVNLIGGGQN (77 aa). Residues 79–114 are coil 1A; it reads EKETMQDLNDRLASYLERVRSLEAANKKLEVQIRQH. Residues 79 to 389 enclose the IF rod domain; that stretch reads EKETMQDLND…RLLEGDGSFD (311 aa). Residues 115 to 130 are linker 1; it reads TEKKGPSKDWSPYYKT. The coil 1B stretch occupies residues 131 to 222; that stretch reads IEDLRKQVFD…KNHQDDVTEL (92 aa). The segment at 223-246 is linker 12; sequence QAQVARSAVTVEVDAPKSQDLGKI. The segment at 247–385 is coil 2; that stretch reads MTELRAQYDG…HTYRRLLEGD (139 aa). The segment at 386-429 is tail; it reads GSFDLQDAVPTVTTQTVKKVITTTQRIVDGKVVSESNDTEVLKS.

The protein belongs to the intermediate filament family. Heterotetramer of two type I and two type II keratins. Keratin-18 associates with keratin-8. Phosphorylated. Post-translationally, proteolytically cleaved by caspases during epithelial cell apoptosis.

Its function is as follows. When phosphorylated, plays a role in filament reorganization. The sequence is that of Keratin, type I cytoskeletal 18 from Xenopus tropicalis (Western clawed frog).